Consider the following 28-residue polypeptide: Small spore coat assembly protein A (28 aa).

The chain crosses the membrane as a helical span at residues 8-28 (GFALLVVLFILLIIVGAAYIY).

It belongs to the SscA family.

The protein resides in the spore coat. It localises to the membrane. Functionally, spore protein involved in the assembly of several components of the spore coat, including CotB, CotG and CotH, and in spore germination. In Bacillus subtilis (strain 168), this protein is Small spore coat assembly protein A.